Reading from the N-terminus, the 207-residue chain is Uracil phosphoribosyltransferase (207 aa).

Residues arginine 77, arginine 102, and 129 to 137 (DPMLATGGS) each bind 5-phospho-alpha-D-ribose 1-diphosphate. Uracil-binding positions include isoleucine 192 and 197–199 (GDA). Aspartate 198 is a binding site for 5-phospho-alpha-D-ribose 1-diphosphate.

This sequence belongs to the UPRTase family. Requires Mg(2+) as cofactor.

It carries out the reaction UMP + diphosphate = 5-phospho-alpha-D-ribose 1-diphosphate + uracil. It participates in pyrimidine metabolism; UMP biosynthesis via salvage pathway; UMP from uracil: step 1/1. Its activity is regulated as follows. Allosterically activated by GTP. In terms of biological role, catalyzes the conversion of uracil and 5-phospho-alpha-D-ribose 1-diphosphate (PRPP) to UMP and diphosphate. The sequence is that of Uracil phosphoribosyltransferase from Ureaplasma urealyticum serovar 10 (strain ATCC 33699 / Western).